Reading from the N-terminus, the 158-residue chain is MKCPYCGFEESKVVDSRSTEDHKAIRRRRECLKCNRRYTTYEKIEDIPVLVIKRDSNREYFDKTKIINGLVKACQKRPISRVQIDSIADEIEKKMNNDMLTEVKSEYIGELIMEKLKEIDEVSYVRFASVYRQFKDINTFIEEITNLMSDKHIGKIKK.

The segment at 3–34 (CPYCGFEESKVVDSRSTEDHKAIRRRRECLKC) is a zinc-finger region. One can recognise an ATP-cone domain in the interval 49 to 139 (VLVIKRDSNR…VYRQFKDINT (91 aa)).

Belongs to the NrdR family. The cofactor is Zn(2+).

Negatively regulates transcription of bacterial ribonucleotide reductase nrd genes and operons by binding to NrdR-boxes. In Clostridium novyi (strain NT), this protein is Transcriptional repressor NrdR.